We begin with the raw amino-acid sequence, 60 residues long: MDDQVKMPTGPLKTCPICGKPAVQATHPFCSSRCRDVDLNRWLKGSYVIPGRDDEVDDVE.

Zn(2+) contacts are provided by Cys15, Cys18, Cys30, and Cys34.

This sequence belongs to the DNA gyrase inhibitor YacG family. As to quaternary structure, interacts with GyrB. Zn(2+) is required as a cofactor.

Inhibits all the catalytic activities of DNA gyrase by preventing its interaction with DNA. Acts by binding directly to the C-terminal domain of GyrB, which probably disrupts DNA binding by the gyrase. This is DNA gyrase inhibitor YacG from Bradyrhizobium diazoefficiens (strain JCM 10833 / BCRC 13528 / IAM 13628 / NBRC 14792 / USDA 110).